Here is a 376-residue protein sequence, read N- to C-terminus: 4-hydroxy-3-methylbut-2-enyl diphosphate reductase (376 aa).

Position 19 (Cys-19) interacts with [4Fe-4S] cluster. (2E)-4-hydroxy-3-methylbut-2-enyl diphosphate-binding residues include His-48 and His-99. Dimethylallyl diphosphate-binding residues include His-48 and His-99. Isopentenyl diphosphate contacts are provided by His-48 and His-99. Cys-121 contacts [4Fe-4S] cluster. Residue His-149 participates in (2E)-4-hydroxy-3-methylbut-2-enyl diphosphate binding. His-149 contributes to the dimethylallyl diphosphate binding site. His-149 serves as a coordination point for isopentenyl diphosphate. Glu-151 serves as the catalytic Proton donor. (2E)-4-hydroxy-3-methylbut-2-enyl diphosphate is bound at residue Thr-208. Position 236 (Cys-236) interacts with [4Fe-4S] cluster. (2E)-4-hydroxy-3-methylbut-2-enyl diphosphate is bound by residues Ser-264, Asn-266, and Ser-307. Dimethylallyl diphosphate-binding residues include Ser-264, Asn-266, and Ser-307. Residues Ser-264, Asn-266, and Ser-307 each contribute to the isopentenyl diphosphate site.

It belongs to the IspH family. [4Fe-4S] cluster is required as a cofactor.

The catalysed reaction is isopentenyl diphosphate + 2 oxidized [2Fe-2S]-[ferredoxin] + H2O = (2E)-4-hydroxy-3-methylbut-2-enyl diphosphate + 2 reduced [2Fe-2S]-[ferredoxin] + 2 H(+). It catalyses the reaction dimethylallyl diphosphate + 2 oxidized [2Fe-2S]-[ferredoxin] + H2O = (2E)-4-hydroxy-3-methylbut-2-enyl diphosphate + 2 reduced [2Fe-2S]-[ferredoxin] + 2 H(+). It participates in isoprenoid biosynthesis; dimethylallyl diphosphate biosynthesis; dimethylallyl diphosphate from (2E)-4-hydroxy-3-methylbutenyl diphosphate: step 1/1. The protein operates within isoprenoid biosynthesis; isopentenyl diphosphate biosynthesis via DXP pathway; isopentenyl diphosphate from 1-deoxy-D-xylulose 5-phosphate: step 6/6. Functionally, catalyzes the conversion of 1-hydroxy-2-methyl-2-(E)-butenyl 4-diphosphate (HMBPP) into a mixture of isopentenyl diphosphate (IPP) and dimethylallyl diphosphate (DMAPP). Acts in the terminal step of the DOXP/MEP pathway for isoprenoid precursor biosynthesis. This chain is 4-hydroxy-3-methylbut-2-enyl diphosphate reductase, found in Treponema pallidum (strain Nichols).